A 635-amino-acid polypeptide reads, in one-letter code: RING finger protein 207 (635 aa).

The RING-type zinc finger occupies 25–64 (CPLCHGQYERPCLLDCFHDFCTGCLRGRATDGRLSCPLCQ). Residues 93–145 (SEAVRCANCDLECSQQDAETTYFCNTCGQPLCARCREETHRARMFARHDIVAL) form a B box-type; atypical zinc finger. Positions 98, 101, 127, and 132 each coordinate Zn(2+). The stretch at 422–460 (EHCRHYEDSYRGLQVEVQNLKDQVQELHRDLTKHHSLIK) forms a coiled coil. A compositionally biased stretch (basic and acidic residues) spans 553–562 (QVPVDEHAEH). The tract at residues 553-635 (QVPVDEHAEH…SGSKGACYQA (83 aa)) is disordered. The span at 589–598 (PNGSSWSLSS) shows a compositional bias: polar residues. The span at 607–622 (NQDHLRPKLEAGDEGW) shows a compositional bias: basic and acidic residues.

Interacts with the core-glycosylated, but not the fully glycosylated form of KCNH2/HERG. Interacts with DNAJA1 and HSPA8. Interacts (via the C-terminus) with HSPA1A; this interaction additively increases KCNH2 expression.

It localises to the cytoplasm. Its function is as follows. Plays a role in cardiac repolarization possibly by stabilizing membrane expression of the potassium channel KCNH2/HERG, or by assisting its synthesis, folding or export from the endoplasmic reticulum, in a heat shock protein-dependent manner. The chain is RING finger protein 207 (Rnf207) from Mus musculus (Mouse).